A 70-amino-acid chain; its full sequence is Spore germination protein-like protein YpzD (70 aa).

Belongs to the GerPA/GerPF family.

In Bacillus subtilis (strain 168), this protein is Spore germination protein-like protein YpzD (ypzD).